The following is a 145-amino-acid chain: Large ribosomal subunit protein uL11 (145 aa).

Belongs to the universal ribosomal protein uL11 family. Part of the ribosomal stalk of the 50S ribosomal subunit. Interacts with L10 and the large rRNA to form the base of the stalk. L10 forms an elongated spine to which L12 dimers bind in a sequential fashion forming a multimeric L10(L12)X complex. In terms of processing, one or more lysine residues are methylated.

Its function is as follows. Forms part of the ribosomal stalk which helps the ribosome interact with GTP-bound translation factors. The protein is Large ribosomal subunit protein uL11 of Rickettsia akari (strain Hartford).